Reading from the N-terminus, the 356-residue chain is Protein RecA (356 aa).

Residue 75 to 82 (GPESSGKT) coordinates ATP.

This sequence belongs to the RecA family.

The protein resides in the cytoplasm. In terms of biological role, can catalyze the hydrolysis of ATP in the presence of single-stranded DNA, the ATP-dependent uptake of single-stranded DNA by duplex DNA, and the ATP-dependent hybridization of homologous single-stranded DNAs. It interacts with LexA causing its activation and leading to its autocatalytic cleavage. This chain is Protein RecA, found in Burkholderia mallei (strain ATCC 23344).